The primary structure comprises 275 residues: Formamidopyrimidine-DNA glycosylase (275 aa).

Residue Pro2 is the Schiff-base intermediate with DNA of the active site. Glu3 acts as the Proton donor in catalysis. The active-site Proton donor; for beta-elimination activity is Lys58. Residues His91 and Arg110 each contribute to the DNA site. The FPG-type zinc finger occupies 238-272 (QVYGQTGKPCPRCGQAIVKLKVGGRGTHICPKCQK). The Proton donor; for delta-elimination activity role is filled by Arg262.

It belongs to the FPG family. Monomer. Zn(2+) serves as cofactor.

The catalysed reaction is Hydrolysis of DNA containing ring-opened 7-methylguanine residues, releasing 2,6-diamino-4-hydroxy-5-(N-methyl)formamidopyrimidine.. It catalyses the reaction 2'-deoxyribonucleotide-(2'-deoxyribose 5'-phosphate)-2'-deoxyribonucleotide-DNA = a 3'-end 2'-deoxyribonucleotide-(2,3-dehydro-2,3-deoxyribose 5'-phosphate)-DNA + a 5'-end 5'-phospho-2'-deoxyribonucleoside-DNA + H(+). Involved in base excision repair of DNA damaged by oxidation or by mutagenic agents. Acts as a DNA glycosylase that recognizes and removes damaged bases. Has a preference for oxidized purines, such as 7,8-dihydro-8-oxoguanine (8-oxoG). Has AP (apurinic/apyrimidinic) lyase activity and introduces nicks in the DNA strand. Cleaves the DNA backbone by beta-delta elimination to generate a single-strand break at the site of the removed base with both 3'- and 5'-phosphates. This is Formamidopyrimidine-DNA glycosylase from Streptococcus pyogenes serotype M28 (strain MGAS6180).